The sequence spans 454 residues: Asparagine--tRNA ligase (454 aa).

It belongs to the class-II aminoacyl-tRNA synthetase family. As to quaternary structure, homodimer.

The protein resides in the cytoplasm. The enzyme catalyses tRNA(Asn) + L-asparagine + ATP = L-asparaginyl-tRNA(Asn) + AMP + diphosphate + H(+). The sequence is that of Asparagine--tRNA ligase from Mesoplasma florum (strain ATCC 33453 / NBRC 100688 / NCTC 11704 / L1) (Acholeplasma florum).